Reading from the N-terminus, the 281-residue chain is Short neuropeptide F (281 aa).

Residues 1–30 (MFHLKRELSQGCALALICLVSLQMQQPAQA) form the signal peptide. Positions 31–64 (EVSSAQGTPLSNLYDNLLQREYAGPVVFPNHQVE) are excised as a propeptide. Phenylalanine amide occurs at positions 77 and 111. The propeptide occupies 115–165 (DPSLPQMRRTAYDDLLERELTLNSQQQQQQLGTEPDSDLGADYDGLYERVV). The tract at residues 137–156 (NSQQQQQQLGTEPDSDLGAD) is disordered. The residue at position 173 (tryptophan 173) is a Tryptophan amide. A propeptide spanning residues 176-246 (SVPQFEANNA…NDTSEFQREV (71 aa)) is cleaved from the precursor. The interval 226–281 (ANDEDTDTDLNNDTSEFQREVRKPMRLRWGRSTGKAPSEQKHTPEETSSIPPKTQN) is disordered. Tryptophan amide is present on tryptophan 254. Residues 257 to 281 (STGKAPSEQKHTPEETSSIPPKTQN) constitute a propeptide that is removed on maturation. Residues 271–281 (ETSSIPPKTQN) show a composition bias toward polar residues.

It belongs to the NPY family. Stage 17 embryos show expression in the two brain hemispheres (neural cells located in the dorsal posterior region), the connected ventral ganglion (pairs of neural cells along the ventral midline) and the peripheral nervous system (expressed in the antennal-maxillary sensory cells). In the brain hemispheres of the feeding third instar larva, expression in neural cells is located in the dorsal-anterior region of the protocerebrum. In the larval ventral ganglion, expression is seen in the neural cells located in the subesophagial region, along the ventral midline and in thoracic and abdominal segments. In the adult brain, expression is seen in the medulla and the mushroom body calyx (at protein level).

The protein resides in the secreted. In terms of biological role, plays a role in controlling food intake and regulating body size. This chain is Short neuropeptide F (sNPF), found in Drosophila melanogaster (Fruit fly).